The following is a 156-amino-acid chain: ATP synthase subunit b (156 aa).

The helical transmembrane segment at 7–29 (LIGQMGTFLVFWWFVNKVIWPMF) threads the bilayer.

The protein belongs to the ATPase B chain family. F-type ATPases have 2 components, F(1) - the catalytic core - and F(0) - the membrane proton channel. F(1) has five subunits: alpha(3), beta(3), gamma(1), delta(1), epsilon(1). F(0) has three main subunits: a(1), b(2) and c(10-14). The alpha and beta chains form an alternating ring which encloses part of the gamma chain. F(1) is attached to F(0) by a central stalk formed by the gamma and epsilon chains, while a peripheral stalk is formed by the delta and b chains.

It is found in the cell inner membrane. F(1)F(0) ATP synthase produces ATP from ADP in the presence of a proton or sodium gradient. F-type ATPases consist of two structural domains, F(1) containing the extramembraneous catalytic core and F(0) containing the membrane proton channel, linked together by a central stalk and a peripheral stalk. During catalysis, ATP synthesis in the catalytic domain of F(1) is coupled via a rotary mechanism of the central stalk subunits to proton translocation. In terms of biological role, component of the F(0) channel, it forms part of the peripheral stalk, linking F(1) to F(0). The polypeptide is ATP synthase subunit b (Dichelobacter nodosus (strain VCS1703A)).